The sequence spans 779 residues: Lysosome membrane protein 2-A (779 aa).

Residues 1-17 (MVKRGCCHRKMVNHKGC) lie on the Cytoplasmic side of the membrane. The helical transmembrane segment at 18 to 38 (LVSGIFLAVIGAVLFILAFAL) threads the bilayer. Topologically, residues 39 to 732 (LPHLINQTTQ…LLNSQFKLIK (694 aa)) are lumenal. Residues Asn44, Asn86, Asn95, Asn114, Asn117, Asn201, Asn239, Asn262, Asn266, Asn277, Asn369, Asn410, Asn440, Asn508, Asn543, Asn601, Asn619, Asn651, and Asn693 are each glycosylated (N-linked (GlcNAc...) asparagine). The chain crosses the membrane as a helical span at residues 733 to 753 (ILGFVPVIVVSIIGGIILIAG). The Cytoplasmic portion of the chain corresponds to 754-779 (ISMFAFGFKKLRQQKQQGYQAIINNE). The short motif at 771–774 (GYQA) is the Tyrosine-type lysosomal sorting signal element.

The protein belongs to the CD36 family. In terms of processing, heavily glycosylated.

Its subcellular location is the lysosome membrane. May act as a lysosomal receptor. May be involved in macropinocytosis and fluid phase exocytosis. Binds to the anionic phospholipid phosphoinositol 4,5-bisphosphate, but not to phosphatidylcholine and only weakly to phosphatidylserine. This chain is Lysosome membrane protein 2-A (lmpA), found in Dictyostelium discoideum (Social amoeba).